Here is a 172-residue protein sequence, read N- to C-terminus: CD-NTase-associated protein 7 (172 aa).

The interval 141 to 172 (AQSPGINGYLENDKTYSAGGRSLTRTSVRNFV) is required for binding to CdnC and to confer phage immunity.

It belongs to the bacterial HORMA family. HORMA1 subfamily. As to quaternary structure, forms complexes with CdnC with 1:1 and 2:2 stoichimetry, and a 1:1:6 CdnC:Cap7:Cap6 complex.

In terms of biological role, sensor protein of a CBASS antivirus system. CBASS (cyclic oligonucleotide-based antiphage signaling system) provides immunity against bacteriophage. The CD-NTase protein synthesizes cyclic nucleotides in response to infection; these serve as specific second messenger signals. The signals activate a diverse range of effectors, leading to bacterial cell death and thus abortive phage infection. A type III-C(AAA) CBASS system. Functionally, binds to a closure peptide (consensus His-Xaa-Xaa-Ile-Leu-Leu-Thr), which allows it to activate CdnC for second messenger synthesis. Protects E.coli strain JP313 against bacteriophage lambda cI- infection. When the cdnC-cap7-cap6-nucC operon is transformed into a susceptible strain it confers bacteriophage immunity. Mutations in the sensor (Cap7 also called HORMA) or effector proteins (CdnC, NucC) but not the disassembly protein (Cap6 also called Trip13) no longer confer immunity. The presence of the intact operon leads to culture collapse and cell death, which occurs before the phage has finished its replication cycle, thus protecting non-infected bacteria by aborting the phage infection and preventing its propagation. In Escherichia coli (strain MS 115-1), this protein is CD-NTase-associated protein 7.